A 367-amino-acid polypeptide reads, in one-letter code: tRNA-specific 2-thiouridylase MnmA (367 aa).

ATP-binding positions include 13 to 20 (GLSGGVDS) and methionine 39. Residues 99–101 (NPD) form an interaction with target base in tRNA region. Catalysis depends on cysteine 104, which acts as the Nucleophile. Cysteine 104 and cysteine 200 are joined by a disulfide. Glycine 128 is an ATP binding site. Positions 150–152 (KDQ) are interaction with tRNA. Cysteine 200 (cysteine persulfide intermediate) is an active-site residue. The interval 307–308 (RY) is interaction with tRNA.

The protein belongs to the MnmA/TRMU family.

The protein resides in the cytoplasm. The enzyme catalyses S-sulfanyl-L-cysteinyl-[protein] + uridine(34) in tRNA + AH2 + ATP = 2-thiouridine(34) in tRNA + L-cysteinyl-[protein] + A + AMP + diphosphate + H(+). In terms of biological role, catalyzes the 2-thiolation of uridine at the wobble position (U34) of tRNA, leading to the formation of s(2)U34. This is tRNA-specific 2-thiouridylase MnmA from Neisseria meningitidis serogroup C (strain 053442).